Reading from the N-terminus, the 372-residue chain is Glutamate 5-kinase (372 aa).

ATP is bound at residue lysine 14. 3 residues coordinate substrate: serine 54, aspartate 141, and asparagine 153. ATP is bound at residue 173-174 (TD). A PUA domain is found at 280–358 (RGTLVLDDGA…DAIEALLGYV (79 aa)).

It belongs to the glutamate 5-kinase family.

The protein localises to the cytoplasm. The catalysed reaction is L-glutamate + ATP = L-glutamyl 5-phosphate + ADP. It participates in amino-acid biosynthesis; L-proline biosynthesis; L-glutamate 5-semialdehyde from L-glutamate: step 1/2. In terms of biological role, catalyzes the transfer of a phosphate group to glutamate to form L-glutamate 5-phosphate. This chain is Glutamate 5-kinase, found in Pseudomonas paraeruginosa (strain DSM 24068 / PA7) (Pseudomonas aeruginosa (strain PA7)).